We begin with the raw amino-acid sequence, 111 residues long: P antigen family member 2 (111 aa).

The segment at 1 to 66 is disordered; sequence MSELLRARSQ…NQAVPAFQGP (66 aa). Residues 8–24 show a composition bias toward polar residues; that stretch reads RSQSSERGNDQESSQPV.

This sequence belongs to the GAGE family.

This Homo sapiens (Human) protein is P antigen family member 2 (PAGE2).